We begin with the raw amino-acid sequence, 272 residues long: Hemin import ATP-binding protein HmuV (272 aa).

The ABC transporter domain maps to 2-255 (LNADHLHVAR…EPIARCYGFR (254 aa)). 34 to 41 (GRNGAGKS) is an ATP binding site.

It belongs to the ABC transporter superfamily. Heme (hemin) importer (TC 3.A.1.14.5) family. As to quaternary structure, the complex is composed of two ATP-binding proteins (HmuV), two transmembrane proteins (HmuU) and a solute-binding protein (HmuT).

It is found in the cell inner membrane. In terms of biological role, part of the ABC transporter complex HmuTUV involved in hemin import. Responsible for energy coupling to the transport system. This chain is Hemin import ATP-binding protein HmuV, found in Burkholderia pseudomallei (strain 1710b).